Reading from the N-terminus, the 446-residue chain is N-succinylarginine dihydrolase (446 aa).

Substrate-binding positions include 19 to 28 (AGLSFGNVAS), N110, and 137 to 138 (HR). The active site involves E174. R213 lines the substrate pocket. H249 is an active-site residue. Substrate is bound by residues D251 and N364. C370 acts as the Nucleophile in catalysis.

This sequence belongs to the succinylarginine dihydrolase family. As to quaternary structure, homodimer.

The enzyme catalyses N(2)-succinyl-L-arginine + 2 H2O + 2 H(+) = N(2)-succinyl-L-ornithine + 2 NH4(+) + CO2. The protein operates within amino-acid degradation; L-arginine degradation via AST pathway; L-glutamate and succinate from L-arginine: step 2/5. Its function is as follows. Catalyzes the hydrolysis of N(2)-succinylarginine into N(2)-succinylornithine, ammonia and CO(2). This is N-succinylarginine dihydrolase from Burkholderia orbicola (strain MC0-3).